The following is an 82-amino-acid chain: Small ribosomal subunit protein bS16c (82 aa).

Belongs to the bacterial ribosomal protein bS16 family.

Its subcellular location is the plastid. It is found in the chloroplast. In Pyropia yezoensis (Susabi-nori), this protein is Small ribosomal subunit protein bS16c.